The chain runs to 437 residues: tRNA modification GTPase MnmE (437 aa).

(6S)-5-formyl-5,6,7,8-tetrahydrofolate is bound by residues arginine 21, glutamate 80, and arginine 120. In terms of domain architecture, TrmE-type G spans 218-361; sequence GFVVVLAGPP…LLDRVAAAAG (144 aa). Asparagine 228 is a K(+) binding site. GTP contacts are provided by residues 228-233, 247-253, and 272-275; these read NAGKST, SPIPGTT, and DTAG. Residue serine 232 participates in Mg(2+) binding. K(+) contacts are provided by serine 247, isoleucine 249, and threonine 252. Residue threonine 253 participates in Mg(2+) binding. Lysine 437 is a (6S)-5-formyl-5,6,7,8-tetrahydrofolate binding site.

The protein belongs to the TRAFAC class TrmE-Era-EngA-EngB-Septin-like GTPase superfamily. TrmE GTPase family. Homodimer. Heterotetramer of two MnmE and two MnmG subunits. K(+) serves as cofactor.

It localises to the cytoplasm. Its function is as follows. Exhibits a very high intrinsic GTPase hydrolysis rate. Involved in the addition of a carboxymethylaminomethyl (cmnm) group at the wobble position (U34) of certain tRNAs, forming tRNA-cmnm(5)s(2)U34. In Methylobacterium sp. (strain 4-46), this protein is tRNA modification GTPase MnmE.